Here is a 140-residue protein sequence, read N- to C-terminus: Putative pre-16S rRNA nuclease (140 aa).

It belongs to the YqgF nuclease family.

It localises to the cytoplasm. Its function is as follows. Could be a nuclease involved in processing of the 5'-end of pre-16S rRNA. The polypeptide is Putative pre-16S rRNA nuclease (Aeromonas salmonicida (strain A449)).